The sequence spans 445 residues: Argininosuccinate synthase (445 aa).

ATP-binding positions include alanine 17 to serine 25 and alanine 43. Tyrosine 99 contacts L-citrulline. 2 residues coordinate ATP: glycine 129 and threonine 131. L-aspartate is bound by residues threonine 131, asparagine 135, and aspartate 136. Asparagine 135 is an L-citrulline binding site. Aspartate 136 is a binding site for ATP. L-citrulline-binding residues include arginine 139 and serine 192. ATP is bound at residue aspartate 194. Residues threonine 201, glutamate 203, and glutamate 280 each contribute to the L-citrulline site.

The protein belongs to the argininosuccinate synthase family. Type 2 subfamily. In terms of assembly, homotetramer.

The protein resides in the cytoplasm. It catalyses the reaction L-citrulline + L-aspartate + ATP = 2-(N(omega)-L-arginino)succinate + AMP + diphosphate + H(+). It functions in the pathway amino-acid biosynthesis; L-arginine biosynthesis; L-arginine from L-ornithine and carbamoyl phosphate: step 2/3. The sequence is that of Argininosuccinate synthase from Burkholderia cenocepacia (strain HI2424).